The chain runs to 764 residues: Nucleolar transcription factor 1 (764 aa).

Residue Met-1 is modified to N-acetylmethionine. Residues 1–21 form a disordered region; sequence MNGEADCPTDLEMAAPKGQDR. 2 DNA-binding regions (HMG box) span residues 112 to 180 and 196 to 264; these read PKKP…ARFR and PEKP…RDYI. Residue Thr-201 is modified to Phosphothreonine. Residues Ser-273, Ser-336, Ser-364, Ser-389, Ser-412, Ser-433, Ser-435, Ser-484, Ser-495, Ser-546, Ser-584, and Ser-638 each carry the phosphoserine modification. Residues 298–362 constitute a DNA-binding region (HMG box 3); the sequence is TKPPPNSYSL…DYEVELLRFL (65 aa). The segment at 381-411 is disordered; the sequence is NINKKQATSPASKKPAQEGGKGGSEKPKRPV. 3 consecutive DNA-binding regions (HMG box) follow at residues 407 to 475, 482 to 549, and 568 to 634; these read PKRP…GGER, PESP…SEMR, and KKPP…DLWV. Residues 459-487 are disordered; that stretch reads REAALKAQSERKPGGEREERGKLPESPKR. Positions 546 to 576 are disordered; that stretch reads SEMRAPPAATNSSKKMKFQGEPKKPPMNGYQ. The interval 648 to 764 is disordered; the sequence is YISNKRKSMT…SGDSSDSDSN (117 aa). The segment covering 664–674 has biased composition (polar residues); it reads PKSSRTTLQSK. The segment covering 677–745 has biased composition (acidic residues); sequence SEEDDEEDED…DDDEDEDNES (69 aa). Residues 746-758 are compositionally biased toward low complexity; that stretch reads EGSSSSSSSSGDS.

Homodimer. Part of Pol I pre-initiation complex (PIC), in which Pol I core assembles with RRN3 and promoter-bound UTBF and SL1/TIF-IB complex. Interacts with TOP2A in the context of Pol I complex. Interacts with TBP. Interacts with TAF1A. Interacts with RASL11A. Binds to IRS1 and PIK3CA. Interacts with DHX33. Interacts with PHF6. Interacts with CEBPA (isoform 1 and isoform 4). Interacts with DDX11. Interacts with NOP53. Interacts with ALKBH2. Phosphorylated and activated by PIK3CA.

Its subcellular location is the nucleus. It is found in the nucleolus. In terms of biological role, recognizes the ribosomal RNA gene promoter and activates transcription mediated by RNA polymerase I (Pol I) through cooperative interactions with the transcription factor SL1/TIF-IB complex. It binds specifically to the upstream control element and can activate Pol I promoter escape. The chain is Nucleolar transcription factor 1 (UBTF) from Homo sapiens (Human).